The following is a 142-amino-acid chain: Large ribosomal subunit protein uL11 (142 aa).

Belongs to the universal ribosomal protein uL11 family. Part of the ribosomal stalk of the 50S ribosomal subunit. Interacts with L10 and the large rRNA to form the base of the stalk. L10 forms an elongated spine to which L12 dimers bind in a sequential fashion forming a multimeric L10(L12)X complex. Post-translationally, one or more lysine residues are methylated.

Its function is as follows. Forms part of the ribosomal stalk which helps the ribosome interact with GTP-bound translation factors. The chain is Large ribosomal subunit protein uL11 from Stenotrophomonas maltophilia (strain R551-3).